The following is an 816-amino-acid chain: Homeobox-leucine zipper protein ROC9 (816 aa).

Residues 26–104 (VFGRKNGPAA…RRKNYHRHTA (79 aa)) form a disordered region. Residues 92 to 101 (KKRRRKNYHR) show a composition bias toward basic residues. A DNA-binding region (homeobox) is located at residues 95–154 (RRKNYHRHTAEQIRIMEALFKESPHPDERQRQQVSKQLGLSARQVKFWFQNRRTQIKAVQ). Residues 149-182 (QIKAVQERHENSLLKSELEKLQDEHRAMRELAKK) are a coiled coil. Positions 265–296 (KSAADGIASPPCSASAGAMQTNSRSPPLHDHD) are disordered. An START domain is found at 302 to 541 (HDDDKPRILE…LQLQCERMVF (240 aa)).

This sequence belongs to the HD-ZIP homeobox family. Class IV subfamily.

It is found in the nucleus. Its function is as follows. Probable transcription factor. The sequence is that of Homeobox-leucine zipper protein ROC9 (ROC9) from Oryza sativa subsp. japonica (Rice).